Reading from the N-terminus, the 286-residue chain is Beta-lactamase Ohio-1 (286 aa).

Residues 1-21 (MRYFRLCIISLLATLPLRVHA) form the signal peptide. The active-site Acyl-ester intermediate is Ser-66. A disulfide bridge connects residues Cys-73 and Cys-119. The active-site Proton acceptor is the Glu-164. Residue 230 to 232 (KTG) coordinates substrate.

This sequence belongs to the class-A beta-lactamase family.

The enzyme catalyses a beta-lactam + H2O = a substituted beta-amino acid. The protein is Beta-lactamase Ohio-1 of Enterobacter cloacae.